We begin with the raw amino-acid sequence, 266 residues long: Single-stranded DNA-binding protein WHY1, chloroplastic (266 aa).

The N-terminal 37 residues, 1 to 37 (MPPPAPLFLSLASTPPPALMPVHHPRAPQSLTLVPPV), are a transit peptide targeting the chloroplast. Positions 53–81 (SPRHSDYFDPRAPPPPRGDGGYGRPPNGA) are disordered. The required for ssDNA binding stretch occupies residues 94-99 (KGKAAL). The Nuclear localization signal signature appears at 172–185 (KGRSEEGKVRKVLK).

This sequence belongs to the Whirly family. As to quaternary structure, homotetramer.

It is found in the plastid. The protein resides in the chloroplast stroma. The protein localises to the nucleus. Its function is as follows. Single-stranded DNA and RNA binding protein that maintains plastid genome stability by preventing break-induced and short homology-dependent illegitimate recombinations. Functions in RNA metabolism and is involved in the maturation of the atpF and 23S ribosomal RNAs. In Zea mays (Maize), this protein is Single-stranded DNA-binding protein WHY1, chloroplastic (WHY1).